The following is a 162-amino-acid chain: Probable metalloprotease y4jG (162 aa).

In terms of domain architecture, MPN spans 9 to 147; it reads TVALPRDCVS…YRLDAKANWN (139 aa). Zn(2+)-binding residues include His-94, His-96, and Asp-107.

It belongs to the peptidase M67B family.

The chain is Probable metalloprotease y4jG from Sinorhizobium fredii (strain NBRC 101917 / NGR234).